We begin with the raw amino-acid sequence, 162 residues long: Transcription elongation factor GreB (162 aa).

Residues 52 to 76 (GKRRLREIDRRIRFLSKRLEALQII) adopt a coiled-coil conformation.

This sequence belongs to the GreA/GreB family. GreB subfamily.

In terms of biological role, necessary for efficient RNA polymerase transcription elongation past template-encoded arresting sites. The arresting sites in DNA have the property of trapping a certain fraction of elongating RNA polymerases that pass through, resulting in locked ternary complexes. Cleavage of the nascent transcript by cleavage factors such as GreA or GreB allows the resumption of elongation from the new 3'terminus. GreB releases sequences of up to 9 nucleotides in length. This chain is Transcription elongation factor GreB, found in Haemophilus ducreyi (strain 35000HP / ATCC 700724).